Consider the following 72-residue polypeptide: Translation initiation factor IF-1 (72 aa).

The S1-like domain occupies 1 to 72; that stretch reads MSKEDVIEVE…TRGRITWRKK (72 aa).

Belongs to the IF-1 family. As to quaternary structure, component of the 30S ribosomal translation pre-initiation complex which assembles on the 30S ribosome in the order IF-2 and IF-3, IF-1 and N-formylmethionyl-tRNA(fMet); mRNA recruitment can occur at any time during PIC assembly.

It localises to the cytoplasm. Its function is as follows. One of the essential components for the initiation of protein synthesis. Stabilizes the binding of IF-2 and IF-3 on the 30S subunit to which N-formylmethionyl-tRNA(fMet) subsequently binds. Helps modulate mRNA selection, yielding the 30S pre-initiation complex (PIC). Upon addition of the 50S ribosomal subunit IF-1, IF-2 and IF-3 are released leaving the mature 70S translation initiation complex. The protein is Translation initiation factor IF-1 of Alkaliphilus metalliredigens (strain QYMF).